The primary structure comprises 56 residues: Attractin (56 aa).

3 disulfides stabilise this stretch: C4–C41, C13–C33, and C20–C26.

Produced by the albumen gland of the egg cordons.

The protein resides in the secreted. Its function is as follows. Water-borne pheromone that attract the marine mollusk Aplysia into breeding aggregations and coordinate male and female reproductive behavior within the aggregation. The chain is Attractin (ATT) from Aplysia vaccaria (California black sea hare).